Here is a 328-residue protein sequence, read N- to C-terminus: Phenylalanine--tRNA ligase alpha subunit (328 aa).

Mg(2+) is bound at residue glutamate 245.

It belongs to the class-II aminoacyl-tRNA synthetase family. Phe-tRNA synthetase alpha subunit type 1 subfamily. Tetramer of two alpha and two beta subunits. The cofactor is Mg(2+).

The protein resides in the cytoplasm. It carries out the reaction tRNA(Phe) + L-phenylalanine + ATP = L-phenylalanyl-tRNA(Phe) + AMP + diphosphate + H(+). The chain is Phenylalanine--tRNA ligase alpha subunit from Helicobacter acinonychis (strain Sheeba).